Here is a 591-residue protein sequence, read N- to C-terminus: Oxaloacetate decarboxylase alpha chain (591 aa).

The 261-residue stretch at 3-263 (IAITDVVLRD…DTGLDILKLE (261 aa)) folds into the Pyruvate carboxyltransferase domain. A Biotinyl-binding domain is found at 518–591 (PAGAGTPVTA…SVGDTLMTLA (74 aa)). K557 bears the N6-biotinyllysine mark.

In terms of assembly, composed of three chains (alpha, beta, and gamma). It depends on biotin as a cofactor.

The enzyme catalyses oxaloacetate + 2 Na(+)(in) + H(+) = pyruvate + 2 Na(+)(out) + CO2. Its function is as follows. Catalyzes the decarboxylation of oxaloacetate coupled to Na(+) translocation. This chain is Oxaloacetate decarboxylase alpha chain (oadA1), found in Salmonella typhimurium (strain LT2 / SGSC1412 / ATCC 700720).